The primary structure comprises 501 residues: Type B diterpene cyclase (501 aa).

The protein belongs to the terpene synthase family. As to quaternary structure, monomer. Mg(2+) is required as a cofactor.

The catalysed reaction is geranylgeranyl diphosphate = tuberculosinyl diphosphate. With respect to regulation, strongly inhibited by 15-aza-dihydrogeranylgeraniol and 5-isopropyl-N,N,N,2-tetramethyl-4-(piperidine-1-carbonyloxy)benzenaminium chloride (Amo-1618). Inhibited by GGPP concentrations higher than 50 uM. Catalyzes the formation of tuberculosinyl diphosphate from geranylgeranyl diphosphate (GGPP). It could also react with (14R/S)-14,15-oxidoGGPP to generate 3alpha- and 3beta-hydroxytuberculosinyl diphosphate. The polypeptide is Type B diterpene cyclase (Mycobacterium tuberculosis (strain ATCC 25618 / H37Rv)).